The chain runs to 571 residues: Urease subunit alpha (571 aa).

A Urease domain is found at 133-571 (AGIDTHIHFI…VALNQRYFFS (439 aa)). Residues histidine 138, histidine 140, and lysine 221 each contribute to the Ni(2+) site. Lysine 221 is subject to N6-carboxylysine. Histidine 223 is a binding site for substrate. Residues histidine 250 and histidine 276 each contribute to the Ni(2+) site. Residue histidine 324 is the Proton donor of the active site. Aspartate 364 is a binding site for Ni(2+).

This sequence belongs to the metallo-dependent hydrolases superfamily. Urease alpha subunit family. As to quaternary structure, heterotrimer of UreA (gamma), UreB (beta) and UreC (alpha) subunits. Three heterotrimers associate to form the active enzyme. Ni cation is required as a cofactor. Post-translationally, carboxylation allows a single lysine to coordinate two nickel ions.

It is found in the cytoplasm. It catalyses the reaction urea + 2 H2O + H(+) = hydrogencarbonate + 2 NH4(+). It participates in nitrogen metabolism; urea degradation; CO(2) and NH(3) from urea (urease route): step 1/1. This chain is Urease subunit alpha, found in Photorhabdus laumondii subsp. laumondii (strain DSM 15139 / CIP 105565 / TT01) (Photorhabdus luminescens subsp. laumondii).